Reading from the N-terminus, the 700-residue chain is Elongation factor G (700 aa).

Residues 8-290 (SLYRNIGISA…AVIDYLPAPT (283 aa)) enclose the tr-type G domain. GTP-binding positions include 17 to 24 (AHIDAGKT), 88 to 92 (DTPGH), and 142 to 145 (NKMD).

The protein belongs to the TRAFAC class translation factor GTPase superfamily. Classic translation factor GTPase family. EF-G/EF-2 subfamily.

It localises to the cytoplasm. Functionally, catalyzes the GTP-dependent ribosomal translocation step during translation elongation. During this step, the ribosome changes from the pre-translocational (PRE) to the post-translocational (POST) state as the newly formed A-site-bound peptidyl-tRNA and P-site-bound deacylated tRNA move to the P and E sites, respectively. Catalyzes the coordinated movement of the two tRNA molecules, the mRNA and conformational changes in the ribosome. The polypeptide is Elongation factor G (Histophilus somni (strain 129Pt) (Haemophilus somnus)).